The chain runs to 311 residues: MAHTNESMVSEFVLLGLSNSWGLQLFFFAIFSIVYVTSVLGNVLIIVIISFDSHLNSPMYFLLSNLSFIDICQSNFATPKMLVDFFIERKTISFEGCMAQIFVLHSFVGSEMMLLVAMAYDRFIAICKPLHYSTIMNRRLCVIFVSISWAVGVLHSVSHLAFTVDLPFCGPNEVDSFFCDLPLVIELACMDTYEMEIMTLTNSGLISLSCFLALIISYTIILIGVRCRSSSGSSKALSTLTAHITVVILFFGPCIYFYIWPFSRLPVDKFLSVFYTVCTPLLNPIIYSLRNEDVKAAMWKLRNRHVNSWKN.

At 1 to 25 (MAHTNESMVSEFVLLGLSNSWGLQL) the chain is on the extracellular side. N-linked (GlcNAc...) asparagine glycosylation occurs at asparagine 5. A helical transmembrane segment spans residues 26–49 (FFFAIFSIVYVTSVLGNVLIIVII). The Cytoplasmic segment spans residues 50–57 (SFDSHLNS). A helical membrane pass occupies residues 58–79 (PMYFLLSNLSFIDICQSNFATP). Topologically, residues 80 to 100 (KMLVDFFIERKTISFEGCMAQ) are extracellular. The cysteines at positions 97 and 189 are disulfide-linked. The chain crosses the membrane as a helical span at residues 101–120 (IFVLHSFVGSEMMLLVAMAY). The Cytoplasmic portion of the chain corresponds to 121-139 (DRFIAICKPLHYSTIMNRR). A helical membrane pass occupies residues 140–158 (LCVIFVSISWAVGVLHSVS). Residues 159-195 (HLAFTVDLPFCGPNEVDSFFCDLPLVIELACMDTYEM) are Extracellular-facing. Residues 196–219 (EIMTLTNSGLISLSCFLALIISYT) form a helical membrane-spanning segment. The Cytoplasmic portion of the chain corresponds to 220 to 235 (IILIGVRCRSSSGSSK). The helical transmembrane segment at 236 to 258 (ALSTLTAHITVVILFFGPCIYFY) threads the bilayer. Residues 259–269 (IWPFSRLPVDK) lie on the Extracellular side of the membrane. A helical membrane pass occupies residues 270 to 289 (FLSVFYTVCTPLLNPIIYSL). Topologically, residues 290–311 (RNEDVKAAMWKLRNRHVNSWKN) are cytoplasmic.

This sequence belongs to the G-protein coupled receptor 1 family.

It is found in the cell membrane. Odorant receptor. This is Olfactory receptor 4K1 (OR4K1) from Homo sapiens (Human).